A 295-amino-acid chain; its full sequence is Cbb3-type cytochrome c oxidase subunit CcoP (295 aa).

Residues M1–K31 are Cytoplasmic-facing. The chain crosses the membrane as a helical span at residues W32–P52. Over A53–K295 the chain is Periplasmic. Cytochrome c domains follow at residues F108–N200 and A207–G292. The heme c site is built by C121, C124, H125, M175, C220, C223, H224, and M269.

It belongs to the CcoP / FixP family. As to quaternary structure, component of the cbb3-type cytochrome c oxidase at least composed of CcoN, CcoO, CcoQ and CcoP. Heme c is required as a cofactor.

It localises to the cell inner membrane. It functions in the pathway energy metabolism; oxidative phosphorylation. Functionally, C-type cytochrome. Part of the cbb3-type cytochrome c oxidase complex. CcoP subunit is required for transferring electrons from donor cytochrome c via its heme groups to CcoO subunit. From there, electrons are shuttled to the catalytic binuclear center of CcoN subunit where oxygen reduction takes place. The complex also functions as a proton pump. This Azospirillum brasilense protein is Cbb3-type cytochrome c oxidase subunit CcoP.